A 327-amino-acid chain; its full sequence is Phenylalanine--tRNA ligase alpha subunit (327 aa).

Mg(2+) is bound at residue glutamate 252.

Belongs to the class-II aminoacyl-tRNA synthetase family. Phe-tRNA synthetase alpha subunit type 1 subfamily. Tetramer of two alpha and two beta subunits. Requires Mg(2+) as cofactor.

It localises to the cytoplasm. It catalyses the reaction tRNA(Phe) + L-phenylalanine + ATP = L-phenylalanyl-tRNA(Phe) + AMP + diphosphate + H(+). This Shewanella putrefaciens (strain CN-32 / ATCC BAA-453) protein is Phenylalanine--tRNA ligase alpha subunit.